The chain runs to 147 residues: Globin, polymeric component P3 (147 aa).

The Globin domain occupies 2 to 146 (HLTADQVAAL…ISDALIAGLE (145 aa)). His96 contacts heme b.

This sequence belongs to the globin family. In terms of assembly, polymer.

This is Globin, polymeric component P3 from Glycera dibranchiata (Bloodworm).